Consider the following 389-residue polypeptide: Protein RAFTIN 1A (389 aa).

The signal sequence occupies residues 1-20 (MARFLVALLATTLVAVQAGG). Basic and acidic residues predominate over residues 73–92 (DRPPFDYRDYSRSPPDDEPS). Positions 73-105 (DRPPFDYRDYSRSPPDDEPSKSTGAASGARDFD) are disordered. A BURP domain is found at 169–383 (FFHEEAVRVG…PYGHIIWAKN (215 aa)).

As to expression, specifically expressed in anthers, in the tapetum and microspores (at protein level).

Its function is as follows. Required for pollen development. Probably synthesized in the tapetum, packaged in Ubisch bodies and transported at appropriate stages to the micropsores. This is Protein RAFTIN 1A (RAFTIN1A) from Triticum aestivum (Wheat).